A 141-amino-acid chain; its full sequence is Hemoglobin subunit alpha (141 aa).

Residues 1–141 (VLSPADKTNV…VSTVLTSKYR (141 aa)) enclose the Globin domain. Ser-3 is modified (phosphoserine). Lys-7 is subject to N6-succinyllysine. Thr-8 is subject to Phosphothreonine. The residue at position 11 (Lys-11) is an N6-succinyllysine. Lys-16 carries the post-translational modification N6-acetyllysine; alternate. Residue Lys-16 is modified to N6-succinyllysine; alternate. Residue Tyr-24 is modified to Phosphotyrosine. Ser-35 is subject to Phosphoserine. Lys-40 is subject to N6-succinyllysine. A Phosphoserine modification is found at Ser-49. Residue His-58 participates in O2 binding. His-87 lines the heme b pocket. A Phosphoserine modification is found at Ser-102. Thr-108 carries the phosphothreonine modification. The residue at position 124 (Ser-124) is a Phosphoserine. Phosphothreonine occurs at positions 134 and 137. A Phosphoserine modification is found at Ser-138.

It belongs to the globin family. In terms of assembly, heterotetramer of two alpha chains and two beta chains. As to expression, red blood cells.

Involved in oxygen transport from the lung to the various peripheral tissues. Functionally, hemopressin acts as an antagonist peptide of the cannabinoid receptor CNR1. Hemopressin-binding efficiently blocks cannabinoid receptor CNR1 and subsequent signaling. This Martes foina (Beech marten) protein is Hemoglobin subunit alpha (HBA).